The chain runs to 253 residues: Ubiquinone/menaquinone biosynthesis C-methyltransferase UbiE (253 aa).

Residues Thr76, Asp97, and 125 to 126 each bind S-adenosyl-L-methionine; that span reads DA.

The protein belongs to the class I-like SAM-binding methyltransferase superfamily. MenG/UbiE family.

The enzyme catalyses a 2-demethylmenaquinol + S-adenosyl-L-methionine = a menaquinol + S-adenosyl-L-homocysteine + H(+). It carries out the reaction a 2-methoxy-6-(all-trans-polyprenyl)benzene-1,4-diol + S-adenosyl-L-methionine = a 5-methoxy-2-methyl-3-(all-trans-polyprenyl)benzene-1,4-diol + S-adenosyl-L-homocysteine + H(+). Its pathway is quinol/quinone metabolism; menaquinone biosynthesis; menaquinol from 1,4-dihydroxy-2-naphthoate: step 2/2. It participates in cofactor biosynthesis; ubiquinone biosynthesis. Functionally, methyltransferase required for the conversion of demethylmenaquinol (DMKH2) to menaquinol (MKH2) and the conversion of 2-polyprenyl-6-methoxy-1,4-benzoquinol (DDMQH2) to 2-polyprenyl-3-methyl-6-methoxy-1,4-benzoquinol (DMQH2). The polypeptide is Ubiquinone/menaquinone biosynthesis C-methyltransferase UbiE (Azotobacter vinelandii (strain DJ / ATCC BAA-1303)).